A 461-amino-acid chain; its full sequence is UDP-N-acetylmuramate--L-alanine ligase (461 aa).

Residue 112-118 (GTHGKTT) coordinates ATP.

It belongs to the MurCDEF family.

It localises to the cytoplasm. It carries out the reaction UDP-N-acetyl-alpha-D-muramate + L-alanine + ATP = UDP-N-acetyl-alpha-D-muramoyl-L-alanine + ADP + phosphate + H(+). Its pathway is cell wall biogenesis; peptidoglycan biosynthesis. Its function is as follows. Cell wall formation. This is UDP-N-acetylmuramate--L-alanine ligase from Hydrogenovibrio crunogenus (strain DSM 25203 / XCL-2) (Thiomicrospira crunogena).